A 68-amino-acid polypeptide reads, in one-letter code: MAVQQNKVSKSRRNNRRAHDALVAANPNECSNCGELRRPHHVCPSCGHYDDKEIVAQADEIDLDEDAA.

The disordered stretch occupies residues 1–20 (MAVQQNKVSKSRRNNRRAHD).

It belongs to the bacterial ribosomal protein bL32 family.

This Ruegeria sp. (strain TM1040) (Silicibacter sp.) protein is Large ribosomal subunit protein bL32.